Here is a 418-residue protein sequence, read N- to C-terminus: MTGHPRPPADGAHTDVCVVGGGPAGLTLALLMLRSGARVTLVERSRSLDRAYRGEILQPGGQALLDALGVLEGARRRGCHEHDGFRLEERGRTLINGDYRRLPGPYNCLLSLPQQHLLTDLLERCRAHPRFTCLTGTKVNGLVEEGGVVRGVVCGGGADGLVVRADCVVGADGRYSTVRKLAGIPYDRIELFDQDVLWCKLTAPATRTVRIFRAGGNPVLAYTSFPDCVQLGWTLPHKGYQALAERGFAHVKERIRAAVPEYADTVDQQLNSFKDVSLLDVFAGSARRWARDGLLLIGDSAHTHSPIGAQGINLAIQDAVAAHPVLCEGLRRRDLSERFLDAVAARRRPETERATRVQVMQSRMMLSTGRVSAAVRPKAAMLVSRTPAYRSVLRRIAYGDQTLRVRSDLFEEGEPATV.

Residues 15–44 and 289–299 contribute to the FAD site; these read DVCV…LVER and WARDGLLLIGD.

Belongs to the PheA/TfdB FAD monooxygenase family. FAD is required as a cofactor.

It carries out the reaction 6-methylpretetramide + NADPH + O2 + 2 H(+) = 4-hydroxy-6-methylpretetramide + NADP(+) + H2O. It participates in antibiotic biosynthesis; oxytetracycline biosynthesis. Its function is as follows. Involved in the biosynthesis of the tetracycline antibiotic, oxytetracycline. Catalyzes the C-4 hydroxylation of 6-methylpretetramide to yield the intermediate 4-hydroxyl-6-methylpretetramid, which is subsequently hydroxylated by OxyL to yield 4-keto-anhydrotetracycline. OxyE serves as the ancillary enzyme to assist OxyL in the hydroxylation of C-4. The chain is 6-methylpretetramide 4-monooxygenase from Streptomyces rimosus.